A 68-amino-acid chain; its full sequence is Conotoxin Lt5.11 (68 aa).

The signal sequence occupies residues Met1–Pro19. A propeptide spanning residues Lys20–Ala54 is cleaved from the precursor.

This sequence belongs to the conotoxin T superfamily. Contains 2 disulfide bonds that can be either 'C1-C3, C2-C4' or 'C1-C4, C2-C3', since these disulfide connectivities have been observed for conotoxins with cysteine framework V (for examples, see AC P0DQQ7 and AC P81755). In terms of tissue distribution, expressed by the venom duct.

Its subcellular location is the secreted. The polypeptide is Conotoxin Lt5.11 (Conus litteratus (Lettered cone)).